The sequence spans 510 residues: Inositol-3-phosphate synthase (510 aa).

Residues glycine 70, glycine 71, asparagine 72, asparagine 73, aspartate 143, isoleucine 180, glutamine 190, arginine 193, threonine 230, alanine 231, asparagine 232, threonine 233, glycine 281, serine 282, aspartate 306, serine 309, asparagine 340, asparagine 341, aspartate 342, lysine 355, glycine 393, aspartate 394, aspartate 422, and serine 423 each coordinate NAD(+).

It belongs to the myo-inositol 1-phosphate synthase family. NAD(+) is required as a cofactor.

It localises to the cytoplasm. The protein localises to the cytosol. The protein resides in the nucleus. It carries out the reaction D-glucose 6-phosphate = 1D-myo-inositol 3-phosphate. It functions in the pathway polyol metabolism; myo-inositol biosynthesis; myo-inositol from D-glucose 6-phosphate: step 1/2. In terms of biological role, key enzyme in myo-inositol biosynthesis pathway that catalyzes the conversion of glucose 6-phosphate to 1-myo-inositol 1-phosphate in a NAD-dependent manner. In Hordeum vulgare (Barley), this protein is Inositol-3-phosphate synthase.